A 225-amino-acid chain; its full sequence is Phosphatidylserine decarboxylase proenzyme (225 aa).

Serine 195 functions as the Schiff-base intermediate with substrate; via pyruvic acid in the catalytic mechanism. Serine 195 is subject to Pyruvic acid (Ser); by autocatalysis.

Belongs to the phosphatidylserine decarboxylase family. PSD-A subfamily. As to quaternary structure, heterodimer of a large membrane-associated beta subunit and a small pyruvoyl-containing alpha subunit. It depends on pyruvate as a cofactor. Is synthesized initially as an inactive proenzyme. Formation of the active enzyme involves a self-maturation process in which the active site pyruvoyl group is generated from an internal serine residue via an autocatalytic post-translational modification. Two non-identical subunits are generated from the proenzyme in this reaction, and the pyruvate is formed at the N-terminus of the alpha chain, which is derived from the carboxyl end of the proenzyme. The post-translation cleavage follows an unusual pathway, termed non-hydrolytic serinolysis, in which the side chain hydroxyl group of the serine supplies its oxygen atom to form the C-terminus of the beta chain, while the remainder of the serine residue undergoes an oxidative deamination to produce ammonia and the pyruvoyl prosthetic group on the alpha chain.

Its subcellular location is the cell membrane. It catalyses the reaction a 1,2-diacyl-sn-glycero-3-phospho-L-serine + H(+) = a 1,2-diacyl-sn-glycero-3-phosphoethanolamine + CO2. The protein operates within phospholipid metabolism; phosphatidylethanolamine biosynthesis; phosphatidylethanolamine from CDP-diacylglycerol: step 2/2. Its function is as follows. Catalyzes the formation of phosphatidylethanolamine (PtdEtn) from phosphatidylserine (PtdSer). This Gluconacetobacter diazotrophicus (strain ATCC 49037 / DSM 5601 / CCUG 37298 / CIP 103539 / LMG 7603 / PAl5) protein is Phosphatidylserine decarboxylase proenzyme.